Reading from the N-terminus, the 343-residue chain is Probable xyloglucan endotransglucosylase/hydrolase protein 30 (343 aa).

Residues 1-23 (MSKSSYNHIFILILCLCLRSSSA) form the signal peptide. The region spanning 24-224 (FTNLNTLSFE…YKFAPFVAEF (201 aa)) is the GH16 domain. E109 (nucleophile) is an active-site residue. E113 acts as the Proton donor in catalysis. Residues E113 and 126 to 128 (QTN) contribute to the xyloglucan site. An N-linked (GlcNAc...) asparagine glycan is attached at N132. Residues 136–140 (HRGRE), 203–204 (DW), G208, and R285 contribute to the xyloglucan site. A disulfide bridge connects residues C280 and C293. Residues 306–343 (TGRLKFGGTEARERRRNRRQQRRPEIEIESDPDDRKLL) are disordered.

This sequence belongs to the glycosyl hydrolase 16 family. XTH group 3 subfamily. Contains at least one intrachain disulfide bond essential for its enzymatic activity. In terms of tissue distribution, predominantly expressed in green siliques.

The protein resides in the secreted. It localises to the cell wall. The protein localises to the extracellular space. It is found in the apoplast. The enzyme catalyses breaks a beta-(1-&gt;4) bond in the backbone of a xyloglucan and transfers the xyloglucanyl segment on to O-4 of the non-reducing terminal glucose residue of an acceptor, which can be a xyloglucan or an oligosaccharide of xyloglucan.. Catalyzes xyloglucan endohydrolysis (XEH) and/or endotransglycosylation (XET). Cleaves and religates xyloglucan polymers, an essential constituent of the primary cell wall, and thereby participates in cell wall construction of growing tissues. This chain is Probable xyloglucan endotransglucosylase/hydrolase protein 30 (XTH30), found in Arabidopsis thaliana (Mouse-ear cress).